An 870-amino-acid chain; its full sequence is Radial spoke head 10 homolog B2 (870 aa).

Over residues 1–16 (MVKEKKKADKKGEKSA) the composition is skewed to basic and acidic residues. The segment at 1–44 (MVKEKKKADKKGEKSARSPSSLSDNLDFSKQDGNTTRQEMSPAG) is disordered. Positions 17-39 (RSPSSLSDNLDFSKQDGNTTRQE) are enriched in polar residues. 10 MORN repeats span residues 86-108 (YEGEKVRGLYEGEGFAAFQGGCT), 109-131 (YRGMFSEGLMHGQGTYIWADGLK), 132-154 (YEGDFVKNVPMNHGVYTWPDGSM), 155-177 (YEGEVVNGMRNGFGMFKCSTQPV), 179-201 (YIGHWCNGKRHGKGSIYYNQEGT), 204-226 (YEGDWVQNIKKGWGIRCYKSGNI), 227-249 (YEGQWEDNMRHGEGRMRWLTTNE), 251-273 (YTGRWERGIQNGFGTHTWFLKRI), 284-306 (YIGEFVNGYRHGRGKFYYASGAM), and 307-329 (YDGEWVSNKKHGMGRLTFKNGRV). Residues 674–704 (NKSPSAVMSHESDAAHSDSARSSSSKLELSP) are disordered. The span at 683–692 (HESDAAHSDS) shows a compositional bias: basic and acidic residues. Residues 693–703 (ARSSSSKLELS) show a composition bias toward low complexity. A coiled-coil region spans residues 784–811 (KEKIRADRLRSTAQAQQRKMEDDELEAR). A disordered region spans residues 840-870 (VSSSHLILDPPKEDVTVSPSSKTITSKKKKK).

As to quaternary structure, interacts with RSPH6A. Does not appear to be part of the axonemal radial spoke complexes 1 or 2.

Its subcellular location is the cytoplasm. The protein localises to the cytoskeleton. The protein resides in the cilium axoneme. It is found in the cell projection. It localises to the cilium. Its subcellular location is the flagellum. May function as part of the axonemal radial spoke complex 3 (RS3). Radial spoke complexes are important for ciliary motility. The protein is Radial spoke head 10 homolog B2 (RSPH10B2) of Homo sapiens (Human).